A 173-amino-acid polypeptide reads, in one-letter code: NADH-ubiquinone oxidoreductase chain 6 (173 aa).

The next 6 helical transmembrane spans lie at 1–21 (MIYF…AVAS), 27–47 (FAAL…VGYG), 53–73 (LVLF…SAAL), 82–102 (WGSW…LLVG), 106–126 (YGWW…MSVL), and 141–161 (GFLL…VLEI).

The protein belongs to the complex I subunit 6 family.

The protein localises to the mitochondrion membrane. The catalysed reaction is a ubiquinone + NADH + 5 H(+)(in) = a ubiquinol + NAD(+) + 4 H(+)(out). In terms of biological role, core subunit of the mitochondrial membrane respiratory chain NADH dehydrogenase (Complex I) that is believed to belong to the minimal assembly required for catalysis. Complex I functions in the transfer of electrons from NADH to the respiratory chain. The immediate electron acceptor for the enzyme is believed to be ubiquinone. The sequence is that of NADH-ubiquinone oxidoreductase chain 6 (MT-ND6) from Latimeria chalumnae (Coelacanth).